Reading from the N-terminus, the 259-residue chain is Type III pantothenate kinase (259 aa).

Position 6 to 13 (6 to 13 (DVGNTNCT)) interacts with ATP. 107–110 (GSDR) is a substrate binding site. The active-site Proton acceptor is aspartate 109. Aspartate 129 serves as a coordination point for K(+). Threonine 132 serves as a coordination point for ATP. Threonine 184 provides a ligand contact to substrate.

It belongs to the type III pantothenate kinase family. Homodimer. NH4(+) is required as a cofactor. It depends on K(+) as a cofactor.

Its subcellular location is the cytoplasm. It catalyses the reaction (R)-pantothenate + ATP = (R)-4'-phosphopantothenate + ADP + H(+). The protein operates within cofactor biosynthesis; coenzyme A biosynthesis; CoA from (R)-pantothenate: step 1/5. Functionally, catalyzes the phosphorylation of pantothenate (Pan), the first step in CoA biosynthesis. In Listeria innocua serovar 6a (strain ATCC BAA-680 / CLIP 11262), this protein is Type III pantothenate kinase.